Consider the following 228-residue polypeptide: Calcyclin-binding protein (228 aa).

N-acetylalanine is present on Ala-2. The interaction with SIAH1 stretch occupies residues 2-80 (ASEELQKDLE…YTVKISNYGW (79 aa)). Phosphoserine is present on Ser-3. Residues Lys-8 and Lys-19 each carry the N6-acetyllysine modification. Ser-34 carries the post-translational modification Phosphoserine. The region spanning 73-167 (VKISNYGWDQ…VENTRWDYLT (95 aa)) is the CS domain. Residues 73–228 (VKISNYGWDQ…EKQAKGDTEF (156 aa)) are interaction with SKP1. N6-acetyllysine occurs at positions 85 and 118. The interaction with S100A6 stretch occupies residues 154–228 (CRKKVENTRW…EKQAKGDTEF (75 aa)). One can recognise an SGS domain in the interval 168-228 (QVEKECKEKE…EKQAKGDTEF (61 aa)).

Component of some large E3 complex at least composed of UBE2D1, SIAH1, CACYBP/SIP, SKP1, APC and TBL1X. Interacts directly with SIAH1, SIAH2 and SKP1. Interacts with protein of the S100 family S100A1, S100A6, S100B, S100P and S100A12 in a calcium-dependent manner. Phosphorylated on serine residues. Phosphorylated upon induction by RA or at high calcium concentrations.

It localises to the nucleus. Its subcellular location is the cytoplasm. Functionally, may be involved in calcium-dependent ubiquitination and subsequent proteasomal degradation of target proteins. Probably serves as a molecular bridge in ubiquitin E3 complexes. Participates in the ubiquitin-mediated degradation of beta-catenin (CTNNB1). The polypeptide is Calcyclin-binding protein (CACYBP) (Macaca fascicularis (Crab-eating macaque)).